Reading from the N-terminus, the 344-residue chain is 4-hydroxy-2-oxovalerate aldolase (344 aa).

One can recognise a Pyruvate carboxyltransferase domain in the interval 8–260 (VTLHDMSLRD…NHGIDLYKIM (253 aa)). Substrate is bound at residue 16 to 17 (RD). A Mn(2+)-binding site is contributed by Asp17. Catalysis depends on His20, which acts as the Proton acceptor. Residues Ser170 and His199 each contribute to the substrate site. Mn(2+) contacts are provided by His199 and His201. Tyr290 serves as a coordination point for substrate.

The protein belongs to the 4-hydroxy-2-oxovalerate aldolase family.

It catalyses the reaction (S)-4-hydroxy-2-oxopentanoate = acetaldehyde + pyruvate. The chain is 4-hydroxy-2-oxovalerate aldolase (mhpE) from Pseudoalteromonas translucida (strain TAC 125).